Reading from the N-terminus, the 83-residue chain is MNYLVMISLALLIAGVDSARDAYIAKNDNCVYECFQDSYCNDLCTKNGAKSGTCDWIGTYGDACLCYALPDNVPIKLSGECHR.

A signal peptide spans 1-18 (MNYLVMISLALLIAGVDS). The LCN-type CS-alpha/beta domain maps to 20–82 (RDAYIAKNDN…VPIKLSGECH (63 aa)). 4 disulfide bridges follow: Cys-30/Cys-81, Cys-34/Cys-54, Cys-40/Cys-64, and Cys-44/Cys-66.

The protein belongs to the long (4 C-C) scorpion toxin superfamily. Sodium channel inhibitor family. Alpha subfamily. As to expression, expressed by the venom gland.

It localises to the secreted. Functionally, binds voltage-independently at site-3 of sodium channels (Nav) and inhibits the inactivation of the activated channels, thereby blocking neuronal transmission. The polypeptide is Toxin AahP985 (Androctonus australis (Sahara scorpion)).